The primary structure comprises 79 residues: CDC42 small effector protein 1 (79 aa).

S-palmitoyl cysteine attachment occurs at residues C10 and C11. The 14-residue stretch at 30-43 folds into the CRIB domain; the sequence is IGEPMNFVHLTHIG. The segment at 41 to 79 is disordered; it reads HIGSGDMGASDGLPRAGGVQEQMRSKCGRDRQWSNSGVL. The segment covering 63–72 has biased composition (basic and acidic residues); sequence MRSKCGRDRQ.

The protein belongs to the CDC42SE/SPEC family.

It is found in the cytoplasm. It localises to the cytoskeleton. The protein resides in the cell membrane. Its function is as follows. Probably involved in the organization of the actin cytoskeleton by acting downstream of CDC42, inducing actin filament assembly. The chain is CDC42 small effector protein 1 (cdc42se1) from Xenopus tropicalis (Western clawed frog).